The sequence spans 160 residues: Transmembrane protein 220 (160 aa).

A run of 5 helical transmembrane segments spans residues 3–23, 30–50, 62–82, 100–120, and 125–145; these read PALWRACNGLMAAFFALAALV, AEVWVVVYTIPAVLTLLVGLN, ISAIHILFCTVWAVGLASYLL, GLVIITAWIILCHSSSKNPVG, and LAIAIVITLFPFISWVYIYIN.

The protein resides in the membrane. The polypeptide is Transmembrane protein 220 (TMEM220) (Homo sapiens (Human)).